The primary structure comprises 196 residues: Somatotropin (196 aa).

An N-terminal signal peptide occupies residues 1-16 (MDKVILVLLMSLGASS). Gln17 is subject to Pyrrolidone carboxylic acid. Zn(2+) is bound at residue His35. Cys67 and Cys169 form a disulfide bridge. Position 178 (Glu178) interacts with Zn(2+). A disulfide bond links Cys186 and Cys194.

Belongs to the somatotropin/prolactin family.

The protein resides in the secreted. Functionally, growth hormone plays an important role in growth control and is involved in the regulation of several anabolic processes. Implicated as an osmoregulatory substance important for seawater adaptation. The polypeptide is Somatotropin (gh) (Takifugu rubripes (Japanese pufferfish)).